We begin with the raw amino-acid sequence, 425 residues long: tRNA(Ile)-lysidine synthase (425 aa).

Position 27–32 (27–32 (SGGLDS)) interacts with ATP.

Belongs to the tRNA(Ile)-lysidine synthase family.

It is found in the cytoplasm. It catalyses the reaction cytidine(34) in tRNA(Ile2) + L-lysine + ATP = lysidine(34) in tRNA(Ile2) + AMP + diphosphate + H(+). Functionally, ligates lysine onto the cytidine present at position 34 of the AUA codon-specific tRNA(Ile) that contains the anticodon CAU, in an ATP-dependent manner. Cytidine is converted to lysidine, thus changing the amino acid specificity of the tRNA from methionine to isoleucine. This Streptococcus pneumoniae serotype 2 (strain D39 / NCTC 7466) protein is tRNA(Ile)-lysidine synthase.